The sequence spans 389 residues: PqqA peptide cyclase (389 aa).

A Radical SAM core domain is found at 20-235; the sequence is VGLPLWLLAE…TNEYRARLEA (216 aa). The [4Fe-4S] cluster site is built by C34, C38, and C41.

It belongs to the radical SAM superfamily. PqqE family. As to quaternary structure, interacts with PqqD. The interaction is necessary for activity of PqqE. The cofactor is [4Fe-4S] cluster.

It carries out the reaction [PQQ precursor protein] + S-adenosyl-L-methionine = E-Y cross-linked-[PQQ precursor protein] + 5'-deoxyadenosine + L-methionine + H(+). It functions in the pathway cofactor biosynthesis; pyrroloquinoline quinone biosynthesis. Functionally, catalyzes the cross-linking of a glutamate residue and a tyrosine residue in the PqqA protein as part of the biosynthesis of pyrroloquinoline quinone (PQQ). The sequence is that of PqqA peptide cyclase from Pseudomonas fluorescens (strain ATCC BAA-477 / NRRL B-23932 / Pf-5).